The chain runs to 812 residues: Mitochondrial intermediate peptidase (812 aa).

Residues 1-35 constitute a mitochondrion transit peptide; that stretch reads MLKLLRPRPWVCNSCLNRVAFPKPYPVGSRSTRWL. Positions 518-544 are disordered; that stretch reads STSEGGPAFGSPESAANDGMAASRGAS. His-587 contacts Zn(2+). Glu-588 is a catalytic residue. 2 residues coordinate Zn(2+): His-591 and His-594.

Belongs to the peptidase M3 family. The cofactor is Zn(2+).

The protein resides in the mitochondrion matrix. It carries out the reaction Release of an N-terminal octapeptide as second stage of processing of some proteins imported into the mitochondrion.. Cleaves proteins, imported into the mitochondrion, to their mature size. While most mitochondrial precursor proteins are processed to the mature form in one step by mitochondrial processing peptidase (MPP), the sequential cleavage by MIP of an octapeptide after initial processing by MPP is a required step for a subgroup of nuclear-encoded precursor proteins destined for the matrix or the inner membrane. This chain is Mitochondrial intermediate peptidase (OCT1), found in Pyricularia oryzae (strain 70-15 / ATCC MYA-4617 / FGSC 8958) (Rice blast fungus).